Reading from the N-terminus, the 534-residue chain is Peptide chain release factor 3 (534 aa).

Residues 9–278 (ARRRTFAIIS…FFVEHAPPPQ (270 aa)) form the tr-type G domain. GTP-binding positions include 18–25 (SHPDAGKT), 86–90 (DTPGH), and 140–143 (NKLD).

Belongs to the TRAFAC class translation factor GTPase superfamily. Classic translation factor GTPase family. PrfC subfamily.

The protein localises to the cytoplasm. Increases the formation of ribosomal termination complexes and stimulates activities of RF-1 and RF-2. It binds guanine nucleotides and has strong preference for UGA stop codons. It may interact directly with the ribosome. The stimulation of RF-1 and RF-2 is significantly reduced by GTP and GDP, but not by GMP. The protein is Peptide chain release factor 3 of Xanthomonas axonopodis pv. citri (strain 306).